The primary structure comprises 155 residues: 6,7-dimethyl-8-ribityllumazine synthase (155 aa).

5-amino-6-(D-ribitylamino)uracil-binding positions include Phe-22, 56 to 58 (AFE), and 80 to 82 (AVI). Residue 85–86 (AT) coordinates (2S)-2-hydroxy-3-oxobutyl phosphate. His-88 (proton donor) is an active-site residue. Position 113 (Phe-113) interacts with 5-amino-6-(D-ribitylamino)uracil. Arg-127 is a binding site for (2S)-2-hydroxy-3-oxobutyl phosphate.

The protein belongs to the DMRL synthase family.

It carries out the reaction (2S)-2-hydroxy-3-oxobutyl phosphate + 5-amino-6-(D-ribitylamino)uracil = 6,7-dimethyl-8-(1-D-ribityl)lumazine + phosphate + 2 H2O + H(+). It functions in the pathway cofactor biosynthesis; riboflavin biosynthesis; riboflavin from 2-hydroxy-3-oxobutyl phosphate and 5-amino-6-(D-ribitylamino)uracil: step 1/2. Its function is as follows. Catalyzes the formation of 6,7-dimethyl-8-ribityllumazine by condensation of 5-amino-6-(D-ribitylamino)uracil with 3,4-dihydroxy-2-butanone 4-phosphate. This is the penultimate step in the biosynthesis of riboflavin. The polypeptide is 6,7-dimethyl-8-ribityllumazine synthase (Clostridium acetobutylicum (strain ATCC 824 / DSM 792 / JCM 1419 / IAM 19013 / LMG 5710 / NBRC 13948 / NRRL B-527 / VKM B-1787 / 2291 / W)).